Reading from the N-terminus, the 824-residue chain is RelA-associated inhibitor (824 aa).

An N-acetylmethionine modification is found at Met1. 2 disordered regions span residues Ser48–Lys87 and Arg99–Leu271. Phosphoserine occurs at positions 84, 100, 102, 110, 113, 119, and 120. Thr123 is subject to Phosphothreonine. Ser134 carries the phosphoserine modification. Residues Arg137, Arg142, Arg144, Arg160, Arg167, and Arg180 each carry the omega-N-methylarginine modification. Residues Ser183, Ser187, and Ser203 each carry the phosphoserine modification. Arg205 bears the Omega-N-methylarginine mark. Phosphothreonine is present on Thr275. Position 279 is a phosphoserine (Ser279). Disordered stretches follow at residues Ser291–Pro370 and Arg388–Pro501. A Phosphothreonine modification is found at Thr307. Phosphoserine occurs at positions 315, 331, and 338. At Thr340 the chain carries Phosphothreonine. Positions Gln359–Pro370 are enriched in low complexity. Residues Ala400–Gln424 are compositionally biased toward pro residues. The span at Met425–Gln440 shows a compositional bias: low complexity. Phosphoserine is present on residues Ser522, Ser563, and Ser593. Residues Phe547 to Arg614 are disordered. Positions Pro575 to Gln597 are enriched in pro residues. ANK repeat units follow at residues Glu655 to Ser684 and His688 to Ala717. One can recognise an SH3 domain in the interval Met754–Arg816.

Belongs to the iASPP family. As to quaternary structure, interacts with TP63 and TP73. Interacts with RELA NF-kappa-B subunit and with SP1 via its C-terminal part. Interacts (via SH3 domain and ANK repeats) with p53/TP53; the interaction inhibits pro-apoptotic activity of p53/TP53. Most abundant in skin with high levels also found in heart, testis and stomach. In 15.5 dpc embryonic heart, expressed at higher levels in atria than ventricles.

The protein localises to the cytoplasm. The protein resides in the nucleus. Functionally, regulator that plays a central role in regulation of apoptosis and transcription via its interaction with NF-kappa-B and p53/TP53 proteins. Inhibits p53/TP53 function, possibly by preventing the association between p53/TP53 and ASPP1 or ASPP2, and therefore suppressing the subsequent activation of apoptosis. Is involved in NF-kappa-B dependent negative regulation of inflammatory response. This chain is RelA-associated inhibitor, found in Mus musculus (Mouse).